The following is a 478-amino-acid chain: GMP reductase (478 aa).

CBS domains lie at 95-152 (VVDT…VRDI) and 153-211 (ALSD…AVDA). Residues 245–247 (DTA) and 295–297 (GVG) contribute to the NADP(+) site. Cys-302 (thioimidate intermediate) is an active-site residue.

It belongs to the IMPDH/GMPR family. GuaB1 subfamily. As to quaternary structure, homooctamer composed of two tetramers. The oligomerization state is regulated by ligands and pH. Requires a monovalent cation as cofactor.

The catalysed reaction is IMP + NH4(+) + NADP(+) = GMP + NADPH + 2 H(+). The protein operates within purine metabolism; IMP biosynthesis via salvage pathway. Activity is allosterically regulated by the ATP/GTP ratio in a pH-dependent manner. At pH 7.8, GTP has only a minor positive effect and ATP only a minor negative effect on the activity, however, at lower pH values, the effects of ATP and GTP increase. ATP-dependent inhibition can be restored by increasing GTP concentration. IMP and XMP are competitive inhibitors. In terms of biological role, involved in the purine-salvage pathway. Catalyzes the NADPH-dependent conversion of GMP to IMP. Is not essential for viability, but may contribute to the regulation of the purine nucleotide pool by recycling GMP to IMP. This Mycolicibacterium smegmatis (strain ATCC 700084 / mc(2)155) (Mycobacterium smegmatis) protein is GMP reductase.